Reading from the N-terminus, the 335-residue chain is tRNA pseudouridine synthase D (335 aa).

The active-site Nucleophile is the Asp77. In terms of domain architecture, TRUD spans 152–308 (GFPNYFTEQR…AQNLNWQFEP (157 aa)).

Belongs to the pseudouridine synthase TruD family.

The catalysed reaction is uridine(13) in tRNA = pseudouridine(13) in tRNA. In terms of biological role, responsible for synthesis of pseudouridine from uracil-13 in transfer RNAs. This is tRNA pseudouridine synthase D from Actinobacillus succinogenes (strain ATCC 55618 / DSM 22257 / CCUG 43843 / 130Z).